The sequence spans 297 residues: Homoserine kinase (297 aa).

82-92 lines the ATP pocket; it reads PLTRGLGSSAS.

This sequence belongs to the GHMP kinase family. Homoserine kinase subfamily.

It is found in the cytoplasm. It catalyses the reaction L-homoserine + ATP = O-phospho-L-homoserine + ADP + H(+). It participates in amino-acid biosynthesis; L-threonine biosynthesis; L-threonine from L-aspartate: step 4/5. In terms of biological role, catalyzes the ATP-dependent phosphorylation of L-homoserine to L-homoserine phosphate. This Bacillus cereus (strain ATCC 14579 / DSM 31 / CCUG 7414 / JCM 2152 / NBRC 15305 / NCIMB 9373 / NCTC 2599 / NRRL B-3711) protein is Homoserine kinase.